Consider the following 710-residue polypeptide: Pentatricopeptide repeat-containing protein At1g02060, chloroplastic (710 aa).

Residues 1 to 21 (MVSSVPKLHALFVSKSQPVLR) constitute a chloroplast transit peptide. PPR repeat units follow at residues 137–171 (QDRYFNSLIRSYGNAGLFQESVKLFQTMKQMGISP), 172–202 (SVLTFNSLLSILLKRGRTGMAHDLFDEMRRT), 208–242 (DSYTFNTLINGFCKNSMVDEAFRIFKDMELYHCNP), 243–277 (DVVTYNTIIDGLCRAGKVKIAHNVLSGMLKKATDV), 280–314 (NVVSYTTLVRGYCMKQEIDEAVLVFHDMLSRGLKP), 315–351 (NAVTYNTLIKGLSEAHRYDEIKDILIGGNDAFTTFAP), 352–386 (DACTFNILIKAHCDAGHLDAAMKVFQEMLNMKLHP), 387–421 (DSASYSVLIRTLCMRNEFDRAETLFNELFEKEVLL), 429–459 (LAAAYNPMFEYLCANGKTKQAEKVFRQLMKR), 463–497 (DPPSYKTLITGHCREGKFKPAYELLVLMLRREFVP), 498–532 (DLETYELLIDGLLKIGEALLAHDTLQRMLRSSYLP), and 533–567 (VATTFHSVLAELAKRKFANESFCLVTLMLEKRIRQ).

It belongs to the PPR family. P subfamily.

Its subcellular location is the plastid. It is found in the chloroplast. The chain is Pentatricopeptide repeat-containing protein At1g02060, chloroplastic from Arabidopsis thaliana (Mouse-ear cress).